The primary structure comprises 1593 residues: ABC transporter C family member 8 (1593 aa).

Transmembrane regions (helical) follow at residues 27 to 47, 75 to 95, 100 to 120, 135 to 155, 169 to 189, 280 to 300, 318 to 338, 392 to 412, 419 to 439, and 505 to 525; these read VVMTLPAIYLLIFGMKRLYYL, VIVSILLVAWKILFFIVIVSI, FEILYSVVTVVQWTVSLGLVY, LYWVFAFFVATVKLRTLTLAI, FSYFVGYCLILILSITSVLFF, FYIAALFKIIQDLLIFVGPTL, YDGLIYALLYFLAPVVQSLLL, LCPYLHMIWSAPLQLAISLVL, ASVFAGLGIMLVMIPINLAIS, and LLLWSMSPVFVSVSTFTVYIL. The ABC transmembrane type-1 1 domain occupies 280 to 561; the sequence is FYIAALFKII…LPSVVSSIIE (282 aa). Residues 594–818 enclose the ABC transporter 1 domain; that stretch reads VKIDNATLEW…GSHFTELMSH (225 aa). 627–634 lines the ATP pocket; sequence GQVGSGKS. Residues 816–938 are disordered; sequence MSHDEQQQQL…PLQKGEKSSV (123 aa). Residues 844–875 adopt a coiled-coil conformation; sequence GDNKESENNEEQNEEEEGENENLLEKVLRKSR. A compositionally biased stretch (acidic residues) spans 851–865; sequence NNEEQNEEEEGENEN. A compositionally biased stretch (low complexity) spans 877–886; the sequence is RSPSPSSNRN. A compositionally biased stretch (acidic residues) spans 905–922; sequence EEDEQDERELMEDIDIDG. Helical transmembrane passes span 1005 to 1025, 1064 to 1084, 1157 to 1177, 1251 to 1271, and 1280 to 1300; these read IGVLLATCIIGFYVLTQLLSI, AKYYLSIYVAFSCGTIAATFL, IIVIAWVSPFIILAMVPVGAL, LAIRLEFLGACLVSCAVLYTV, and GTAGLVITYALAITGNMNWMV. The ABC transmembrane type-1 2 domain occupies 1010 to 1308; the sequence is ATCIIGFYVL…MVRMSCDLEN (299 aa). The 235-residue stretch at 1344–1578 folds into the ABC transporter 2 domain; that stretch reads IVFKNLWLTY…QDSIYYSLVK (235 aa). 1378-1385 is a binding site for ATP; that stretch reads GRTGAGKS.

Belongs to the ABC transporter superfamily. ABCC family. Conjugate transporter (TC 3.A.1.208) subfamily.

The protein resides in the membrane. This Dictyostelium discoideum (Social amoeba) protein is ABC transporter C family member 8 (abcC8).